Consider the following 220-residue polypeptide: Adenylate kinase (220 aa).

10–15 contacts ATP; sequence GAGKGT. The interval 30–59 is NMP; it reads STGDMLRAAVKAGTPLGVEAKGYMDAGKLV. AMP contacts are provided by residues T31, R36, 57 to 59, 85 to 88, and Q92; these read KLV and GFPR. Positions 122 to 159 are LID; it reads GRRTHPASGRTYHVKFNPPKVEGHDDVTGEPLIQRDDD. Residues R123 and 132-133 each bind ATP; that span reads TY. R156 and R167 together coordinate AMP. G206 contributes to the ATP binding site.

It belongs to the adenylate kinase family. Monomer.

The protein localises to the cytoplasm. The enzyme catalyses AMP + ATP = 2 ADP. It functions in the pathway purine metabolism; AMP biosynthesis via salvage pathway; AMP from ADP: step 1/1. Functionally, catalyzes the reversible transfer of the terminal phosphate group between ATP and AMP. Plays an important role in cellular energy homeostasis and in adenine nucleotide metabolism. This Burkholderia cenocepacia (strain HI2424) protein is Adenylate kinase.